The sequence spans 979 residues: Probable serine/threonine-protein kinase iksA (979 aa).

Residues N32, N110, N120, N121, N147, N155, N161, N220, N231, and N243 are each glycosylated (N-linked (GlcNAc...) asparagine). The segment at S207–S245 is disordered. The segment covering N212–S244 has biased composition (low complexity). A Protein kinase domain is found at F261–I568. Residues I267–V275 and K293 contribute to the ATP site. Catalysis depends on D397, which acts as the Proton acceptor. N-linked (GlcNAc...) asparagine glycans are attached at residues N592, N597, N615, N645, N646, N663, and N699. Positions T593–T602 are enriched in polar residues. The interval T593–N666 is disordered. Residues S610 to N666 are compositionally biased toward low complexity. Over residues N713–S727 the composition is skewed to acidic residues. The segment at N713–P793 is disordered. Composition is skewed to low complexity over residues T728–D737 and N753–K773. N-linked (GlcNAc...) asparagine glycans are attached at residues N731 and N734. Residues F846–V866 traverse the membrane as a helical segment. N870 and N894 each carry an N-linked (GlcNAc...) asparagine glycan. A run of 2 helical transmembrane segments spans residues I912–P932 and F956–F976.

This sequence belongs to the protein kinase superfamily. Ser/Thr protein kinase family.

The protein localises to the membrane. The enzyme catalyses L-seryl-[protein] + ATP = O-phospho-L-seryl-[protein] + ADP + H(+). The catalysed reaction is L-threonyl-[protein] + ATP = O-phospho-L-threonyl-[protein] + ADP + H(+). This chain is Probable serine/threonine-protein kinase iksA (iksA), found in Dictyostelium discoideum (Social amoeba).